Reading from the N-terminus, the 519-residue chain is MLSVLSINYRYYLMELIDFSSSVWSIVPALLAIILAIATRRVLVSLSAGIIIGSLMLSDWQIGSAFNYLVKNVVSLVYADGEINSNMNIVLFLLLLGVLTALLTVSGSNRAFAEWAQSRIKGRRGAKLLAASLVFVTFIDDYFHSLAVGAIARPVTDRFKVSRAKLAYILDSTAAPMCVMMPVSSWGAYIITLIGGLLATYSITEYTPIGAFVAMSSMNFYAIFSIIMVFFVAYFSFDIASMVRHEKLALKNTEDQLEEETGTKGQVRNLILPILVLIIATVSMMIYTGAEALAADGKVFSVLGTFENTVVGTSLVVGGFCSIIISTLLIILDRQVSVPEYVRSWIVGIKSMSGAIAILFFAWTINKIVGDMQTGKYLSSLVSGNIPMQFLPVILFVLGAAMAFSTGTSWGTFGIMLPIAAAMAANAAPELLLPCLSAVMAGAVCGDHCSPVSDTTILSSTGAKCNHIDHVTTQLPYAATVATATSIGYIVVGFTYSGLAGFAATAVSLIVIIFAVKKR.

The next 13 membrane-spanning stretches (helical) occupy residues 19-39 (FSSSVWSIVPALLAIILAIAT), 42-62 (VLVSLSAGIIIGSLMLSDWQI), 87-107 (MNIVLFLLLLGVLTALLTVSG), 128-148 (LLAASLVFVTFIDDYFHSLAV), 179-199 (VMMPVSSWGAYIITLIGGLLA), 220-240 (FYAIFSIIMVFFVAYFSFDIA), 270-290 (LILPILVLIIATVSMMIYTGA), 311-331 (VGTSLVVGGFCSIIISTLLII), 345-365 (WIVGIKSMSGAIAILFFAWTI), 386-406 (IPMQFLPVILFVLGAAMAFST), 413-433 (FGIMLPIAAAMAANAAPELLL), 475-495 (LPYAATVATATSIGYIVVGFT), and 496-516 (YSGLAGFAATAVSLIVIIFAV).

It is found in the cell membrane. This is an uncharacterized protein from Haemophilus influenzae (strain ATCC 51907 / DSM 11121 / KW20 / Rd).